The following is a 565-amino-acid chain: Sulfite reductase [NADPH] hemoprotein beta-component (565 aa).

Residues cysteine 429, cysteine 435, cysteine 474, and cysteine 478 each contribute to the [4Fe-4S] cluster site. Cysteine 478 lines the siroheme pocket.

This sequence belongs to the nitrite and sulfite reductase 4Fe-4S domain family. In terms of assembly, alpha(8)-beta(8). The alpha component is a flavoprotein, the beta component is a hemoprotein. Siroheme is required as a cofactor. It depends on [4Fe-4S] cluster as a cofactor.

It catalyses the reaction hydrogen sulfide + 3 NADP(+) + 3 H2O = sulfite + 3 NADPH + 4 H(+). Its pathway is sulfur metabolism; hydrogen sulfide biosynthesis; hydrogen sulfide from sulfite (NADPH route): step 1/1. In terms of biological role, component of the sulfite reductase complex that catalyzes the 6-electron reduction of sulfite to sulfide. This is one of several activities required for the biosynthesis of L-cysteine from sulfate. In Shewanella sp. (strain MR-4), this protein is Sulfite reductase [NADPH] hemoprotein beta-component.